We begin with the raw amino-acid sequence, 154 residues long: Myoglobin (154 aa).

A Globin domain is found at G2–K148. Position 65 (H65) interacts with nitrite. H65 provides a ligand contact to O2. Heme b is bound at residue H94.

The protein belongs to the globin family. Monomeric.

It is found in the cytoplasm. The protein localises to the sarcoplasm. The enzyme catalyses Fe(III)-heme b-[protein] + nitric oxide + H2O = Fe(II)-heme b-[protein] + nitrite + 2 H(+). The catalysed reaction is H2O2 + AH2 = A + 2 H2O. Functionally, monomeric heme protein which primary function is to store oxygen and facilitate its diffusion within muscle tissues. Reversibly binds oxygen through a pentacoordinated heme iron and enables its timely and efficient release as needed during periods of heightened demand. Depending on the oxidative conditions of tissues and cells, and in addition to its ability to bind oxygen, it also has a nitrite reductase activity whereby it regulates the production of bioactive nitric oxide. Under stress conditions, like hypoxia and anoxia, it also protects cells against reactive oxygen species thanks to its pseudoperoxidase activity. This is Myoglobin (MB) from Aethia pygmaea (Whiskered auklet).